A 473-amino-acid chain; its full sequence is GTPase Der (473 aa).

EngA-type G domains are found at residues 5 to 170 and 178 to 351; these read PVVA…PNQE and LKLA…QSSM. GTP-binding positions include 11–18, 58–62, 123–126, 184–191, 231–235, and 296–299; these read GRPNVGKS, DTGGI, NKVD, DTAGV, and NKWD. The KH-like domain occupies 352–436; it reads FEVSTNRLTQ…PLNVVFKLNE (85 aa). Over residues 438–454 the composition is skewed to polar residues; the sequence is PYANKSDTPTKAKTQQL. The interval 438 to 473 is disordered; the sequence is PYANKSDTPTKAKTQQLRQRERNRAQKFTTKDKKPR. Over residues 455–473 the composition is skewed to basic and acidic residues; that stretch reads RQRERNRAQKFTTKDKKPR.

It belongs to the TRAFAC class TrmE-Era-EngA-EngB-Septin-like GTPase superfamily. EngA (Der) GTPase family. In terms of assembly, associates with the 50S ribosomal subunit.

In terms of biological role, GTPase that plays an essential role in the late steps of ribosome biogenesis. The polypeptide is GTPase Der (Psychrobacter arcticus (strain DSM 17307 / VKM B-2377 / 273-4)).